Consider the following 128-residue polypeptide: Sulfurtransferase TusD (128 aa).

Cysteine 78 serves as the catalytic Cysteine persulfide intermediate.

The protein belongs to the DsrE/TusD family. As to quaternary structure, heterohexamer, formed by a dimer of trimers. The hexameric TusBCD complex contains 2 copies each of TusB, TusC and TusD. The TusBCD complex interacts with TusE.

The protein resides in the cytoplasm. In terms of biological role, part of a sulfur-relay system required for 2-thiolation of 5-methylaminomethyl-2-thiouridine (mnm(5)s(2)U) at tRNA wobble positions. Accepts sulfur from TusA and transfers it in turn to TusE. This chain is Sulfurtransferase TusD, found in Escherichia coli O17:K52:H18 (strain UMN026 / ExPEC).